The sequence spans 391 residues: Processive diacylglycerol beta-glucosyltransferase (391 aa).

It belongs to the glycosyltransferase 28 family. UgtP subfamily.

It localises to the cell membrane. It catalyses the reaction a 1,2-diacyl-3-O-(beta-D-glucopyranosyl)-sn-glycerol + UDP-alpha-D-glucose = a 1,2-diacyl-3-O-(beta-D-Glc-(1-&gt;6)-beta-D-Glc)-sn-glycerol + UDP + H(+). It carries out the reaction a 1,2-diacyl-sn-glycerol + UDP-alpha-D-glucose = a 1,2-diacyl-3-O-(beta-D-glucopyranosyl)-sn-glycerol + UDP + H(+). Its pathway is glycolipid metabolism; diglucosyl-diacylglycerol biosynthesis. Processive glucosyltransferase involved in the biosynthesis of both the bilayer- and non-bilayer-forming membrane glucolipids. Is able to successively transfer two glucosyl residues to diacylglycerol (DAG), thereby catalyzing the formation of beta-monoglucosyl-DAG (3-O-(beta-D-glucopyranosyl)-1,2-diacyl-sn-glycerol) and beta-diglucosyl-DAG (3-O-(beta-D-glucopyranosyl-beta-(1-&gt;6)-D-glucopyranosyl)-1,2-diacyl-sn-glycerol). Beta-diglucosyl-DAG is the predominant glycolipid found in Bacillales and is also used as a membrane anchor for lipoteichoic acid (LTA). In Staphylococcus aureus (strain MRSA252), this protein is Processive diacylglycerol beta-glucosyltransferase.